The following is a 209-amino-acid chain: Nucleoside triphosphate pyrophosphatase (209 aa).

Residue Asp74 is the Proton acceptor of the active site.

The protein belongs to the Maf family. A divalent metal cation is required as a cofactor.

It is found in the cytoplasm. The enzyme catalyses a ribonucleoside 5'-triphosphate + H2O = a ribonucleoside 5'-phosphate + diphosphate + H(+). It carries out the reaction a 2'-deoxyribonucleoside 5'-triphosphate + H2O = a 2'-deoxyribonucleoside 5'-phosphate + diphosphate + H(+). In terms of biological role, nucleoside triphosphate pyrophosphatase. May have a dual role in cell division arrest and in preventing the incorporation of modified nucleotides into cellular nucleic acids. This Neorickettsia sennetsu (strain ATCC VR-367 / Miyayama) (Ehrlichia sennetsu) protein is Nucleoside triphosphate pyrophosphatase.